We begin with the raw amino-acid sequence, 241 residues long: Sugar fermentation stimulation protein homolog (241 aa).

Belongs to the SfsA family.

The protein is Sugar fermentation stimulation protein homolog of Jannaschia sp. (strain CCS1).